Here is a 304-residue protein sequence, read N- to C-terminus: N-carbamoyl-D-amino acid hydrolase (304 aa).

Positions 5-276 (MILAVGQQGP…DEVITAAVDL (272 aa)) constitute a CN hydrolase domain. Active-site residues include glutamate 47, lysine 127, and cysteine 172.

In terms of assembly, homotetramer.

The enzyme catalyses an N-carbamoyl-D-amino acid + H2O + 2 H(+) = a D-alpha-amino acid + NH4(+) + CO2. In terms of biological role, the enzyme catalyzes the hydrolysis of N-carbamoyl-D-amino acids to the corresponding which are useful intermediates in the preparation of beta-lactam antibiotics. Industrial production of beta-lactam antibiotics is now being developed using this enzyme. The sequence is that of N-carbamoyl-D-amino acid hydrolase from Rhizobium radiobacter (Agrobacterium tumefaciens).